The chain runs to 629 residues: Ionotropic receptor 75a (629 aa).

Over Met1–Pro335 the chain is Extracellular. N-linked (GlcNAc...) asparagine glycans are attached at residues Asn61, Asn112, Asn126, Asn144, Asn166, and Asn232. Residues Leu336 to Phe356 form a helical membrane-spanning segment. Residues Tyr357–Ser374 lie on the Cytoplasmic side of the membrane. Residues Leu375–Pro395 traverse the membrane as a helical segment. Residues Arg396–Leu402 are Extracellular-facing. Residues Ile403 to Val423 traverse the membrane as a helical segment. At Ser424–Tyr592 the chain is on the cytoplasmic side. Residues Val593–Val613 traverse the membrane as a helical segment. Topologically, residues Glu614 to Pro629 are extracellular.

The protein belongs to the glutamate-gated ion channel (TC 1.A.10.1) family. In terms of tissue distribution, expressed in acetic-acid-sensing neurons in the antennal coeloconic 2 (ac2) and antennal coeloconic 3 (ac3) sensilla class of sensory hairs (at protein level).

Its subcellular location is the cell membrane. It localises to the cell projection. The protein localises to the dendrite. In terms of biological role, odorant receptor for acetic and propionic acid. Functions as part of an olfactory receptor complex including the ionotropic receptor coreceptor Ir8a. This chain is Ionotropic receptor 75a, found in Drosophila melanogaster (Fruit fly).